Here is a 110-residue protein sequence, read N- to C-terminus: Acid stress chaperone HdeA (110 aa).

The N-terminal stretch at 1–21 (MKKVLGVILGGLLLLPVVSNA) is a signal peptide. A disulfide bridge connects residues C39 and C87.

Belongs to the HdeA family.

The protein resides in the periplasm. In terms of biological role, required for optimal acid stress protection. Exhibits a chaperone-like activity only at low pH by suppressing non-specifically the aggregation of denaturated periplasmic proteins. This chain is Acid stress chaperone HdeA, found in Escherichia coli O157:H7.